The chain runs to 154 residues: Large ribosomal subunit protein uL15 (154 aa).

The segment at 1–54 (MKLHDLTPAPGSRKPKKRVGRGPGGTDKTAGRGHKGQKSRSGAGKGPFFEGGRS) is disordered.

It belongs to the universal ribosomal protein uL15 family. In terms of assembly, part of the 50S ribosomal subunit.

Binds to the 23S rRNA. The chain is Large ribosomal subunit protein uL15 from Deinococcus geothermalis (strain DSM 11300 / CIP 105573 / AG-3a).